Reading from the N-terminus, the 711-residue chain is Dixin (711 aa).

Leu2 carries N-myristoyl glycine lipidation. Residue Val13 is modified to Phosphoserine. The Calponin-homology (CH) domain occupies 20–153; sequence EQQLQAYVAW…LVLALAAHFK (134 aa). The actin-binding stretch occupies residues 153–326; sequence KPGSSRTVSQ…LEKEMEEAKK (174 aa). Ser212 bears the Phosphoserine mark. 3 disordered regions span residues 233–258, 271–298, and 584–623; these read GQQK…AKSE, VIIP…PGSR, and TQKK…SSPA. A compositionally biased stretch (low complexity) spans 237–254; that stretch reads SPSESSCSSLTSPSPIHS. Position 257 is a phosphoserine (Ser257). Basic and acidic residues predominate over residues 278 to 295; the sequence is IENRTDEPDSPSSRDWRP. The stretch at 279 to 452 forms a coiled coil; sequence ENRTDEPDSP…NRLLGEYKKE (174 aa). Residues 597–623 show a composition bias toward polar residues; it reads PRNQASSEYRASWPPNSTLPHSQSSPA. The DIX domain maps to 600–680; the sequence is QASSEYRASW…HFKALDPEFG (81 aa). Ser618 is modified (phosphoserine).

This sequence belongs to the DIXDC1 family. May bind filamentous actin. Directly interacts (via DIX domain) with DVL2 (via DIX domain). Interacts with gamma-tubulin. Interacts with the complex composed of DVL2 and Rac. Interacts with AXIN1; competes with MAP3K1. Interacts with MAP3K4 preventing MAP3K4 interaction with AXIN1. In terms of processing, phosphorylated on tyrosine and serine residues. Post-translationally, polyubiquitinated, leading to its proteasomal degradation. WNT3A signaling increases DIXDC1 protein levels by inhibiting its ubiquitination and subsequent degradation. In terms of tissue distribution, abundantly expressed in brain and testis and to a lower extent in lung, kidney, colon, ovary and urinary bladder. Expressed in brain, liver, testis and spleen (at protein level). Expressed throughout the brain with strong expression in main and accessory olfactory bulbs, cerebral cortex, piriform cortex, hippocampus, habenular nucleus, dorsal thalamus, superior and inferior colliculi and cerebellum.

The protein localises to the cell junction. The protein resides in the focal adhesion. It is found in the cytoplasm. Its subcellular location is the cytoskeleton. It localises to the stress fiber. Positive effector of the Wnt signaling pathway; activates WNT3A signaling via DVL2. Regulates JNK activation by AXIN1 and DVL2. The polypeptide is Dixin (Dixdc1) (Mus musculus (Mouse)).